The chain runs to 157 residues: AP-1 complex subunit sigma-2 (157 aa).

Belongs to the adaptor complexes small subunit family. In terms of assembly, adaptor protein complex 1 (AP-1) is a heterotetramer composed of two large adaptins (gamma-type subunit AP1G1 and beta-type subunit AP1B1), a medium adaptin (mu-type subunit AP1M1 or AP1M2) and a small adaptin (sigma-type subunit AP1S1 or AP1S2 or AP1S3). Binds to MUC1. Widely expressed.

The protein localises to the golgi apparatus. It localises to the cytoplasmic vesicle membrane. It is found in the membrane. The protein resides in the clathrin-coated pit. Functionally, subunit of clathrin-associated adaptor protein complex 1 that plays a role in protein sorting in the late-Golgi/trans-Golgi network (TGN) and/or endosomes. The AP complexes mediate both the recruitment of clathrin to membranes and the recognition of sorting signals within the cytosolic tails of transmembrane cargo molecules. This Homo sapiens (Human) protein is AP-1 complex subunit sigma-2 (AP1S2).